Consider the following 286-residue polypeptide: Bifunctional protein FolD (286 aa).

NADP(+) is bound by residues 165–167 (GRS), Ser190, and Val231.

This sequence belongs to the tetrahydrofolate dehydrogenase/cyclohydrolase family. Homodimer.

The enzyme catalyses (6R)-5,10-methylene-5,6,7,8-tetrahydrofolate + NADP(+) = (6R)-5,10-methenyltetrahydrofolate + NADPH. It carries out the reaction (6R)-5,10-methenyltetrahydrofolate + H2O = (6R)-10-formyltetrahydrofolate + H(+). Its pathway is one-carbon metabolism; tetrahydrofolate interconversion. Functionally, catalyzes the oxidation of 5,10-methylenetetrahydrofolate to 5,10-methenyltetrahydrofolate and then the hydrolysis of 5,10-methenyltetrahydrofolate to 10-formyltetrahydrofolate. This is Bifunctional protein FolD from Bacillus mycoides (strain KBAB4) (Bacillus weihenstephanensis).